The primary structure comprises 316 residues: MAGLSSLPSRVVVLMGGPSAEREVSLSTGRGCAEALRGEGFDVIEVDPGVTHAGAELCARLQEIQPDVVFNALHGRWGEDGCVQGLLEWMRLPYTHSGVLSSALAMDKTRAKTALKAHGLPVVDSIIAPKEAVVAAHVMATPYVVKPNNEGSSVGVYLVNEAANGPPHLSDDMPDEVMVETYAPGRELTVSVLGDAPGDPGALTVTDILTDGWYDYDAKYKPGGSRHVVPAQIPQEIWDACMDMAVRAHTILGCKGVSRTDYRWDEARGLDGLIILEVNTQPGMTPTSLTPEQGEAVGMSFGKLCRWLVEDATCDR.

One can recognise an ATP-grasp domain in the interval 112–310 (KTALKAHGLP…FGKLCRWLVE (199 aa)). 139 to 189 (MATPYVVKPNNEGSSVGVYLVNEAANGPPHLSDDMPDEVMVETYAPGRELT) is a binding site for ATP. Positions 261, 277, and 279 each coordinate Mg(2+).

Belongs to the D-alanine--D-alanine ligase family. Requires Mg(2+) as cofactor. Mn(2+) serves as cofactor.

It is found in the cytoplasm. The catalysed reaction is 2 D-alanine + ATP = D-alanyl-D-alanine + ADP + phosphate + H(+). The protein operates within cell wall biogenesis; peptidoglycan biosynthesis. In terms of biological role, cell wall formation. The chain is D-alanine--D-alanine ligase from Jannaschia sp. (strain CCS1).